A 355-amino-acid polypeptide reads, in one-letter code: Replication-associated protein (355 aa).

A CRESS-DNA virus Rep endonuclease domain is found at 11–114; the sequence is SHRNVNTFLT…PLAVFERGTF (104 aa). The RCR-1 motif lies at 18–21; the sequence is FLTY. Positions 52, 60, and 62 each coordinate a divalent metal cation. Residues 60-62 carry the RCR-2 motif; it reads HLH. Residue Y100 is the For DNA cleavage activity of the active site. The RCR-3 signature appears at 100 to 103; the sequence is YILK. E104 is an a divalent metal cation binding site. Residues 119–128 are compositionally biased toward polar residues; it reads SSFQGNPSKG. A disordered region spans residues 119 to 138; sequence SSFQGNPSKGNSEKKPSKDE. The segment covering 129–138 has biased composition (basic and acidic residues); sequence NSEKKPSKDE. The tract at residues 175–187 is oligomerization; sequence SANKLFPEIQEEF. 229–236 provides a ligand contact to ATP; it reads GPTRTGKS. The interval 252–270 is transactivation; the sequence is VDWSSYNEDAIYNIVDDIP. A Nuclear localization signal motif is present at residues 292 to 303; it reads KYGKKKKVQMKS.

This sequence belongs to the geminiviridae Rep protein family. As to quaternary structure, homooligomer. Rep binds to repeated DNA motifs (iterons). Forms the O-complex, which is a Rep-DNA complex involved in the initiation of RCR. Part of the C- and V-complexes which are RepA-Rep-DNA complexes involved in the c-sense and v-sense transcription. Mg(2+) serves as cofactor. Requires Mn(2+) as cofactor.

The protein localises to the host nucleus. Functionally, essential for the replication of viral ssDNA. The closed circular ssDNA genome is first converted to a superhelical dsDNA. Rep binds a specific region at the genome origin of replication. It introduces an endonucleolytic nick within the conserved sequence 5'-TAATATTAC-3' in the intergenic region of the genome present in all geminiviruses, thereby initiating the rolling circle replication (RCR). Following cleavage, binds covalently to the 5'-phosphate of DNA as a tyrosyl ester. The cleavage gives rise to a free 3'-OH that serves as a primer for the cellular DNA polymerase. The polymerase synthesizes the (+) strand DNA by rolling circle mechanism. After one round of replication, a Rep-catalyzed nucleotidyl transfer reaction releases a circular single-stranded virus genome, thereby terminating the replication. Displays origin-specific DNA cleavage, nucleotidyl transferase, ATPase and helicase activities. Acts as an inhibitor of C-sense gene transcription. In Maize streak virus genotype B (isolate Tas) (MSV), this protein is Replication-associated protein.